Reading from the N-terminus, the 358-residue chain is GTPase Obg (358 aa).

The Obg domain occupies 1-159 (MKFLDEAKVY…RWIWLRLKLI (159 aa)). Residues 160-327 (ADAGLVGLPN…VLRALVEVIG (168 aa)) enclose the OBG-type G domain. GTP contacts are provided by residues 166–173 (GLPNAGKS), 191–195 (FTTLH), 212–215 (DIPG), 279–282 (NKID), and 308–310 (SGV). 2 residues coordinate Mg(2+): Ser173 and Thr193. The disordered stretch occupies residues 335–358 (AKGADASAAQAMETPVARAKPWSP).

This sequence belongs to the TRAFAC class OBG-HflX-like GTPase superfamily. OBG GTPase family. Monomer. Requires Mg(2+) as cofactor.

It is found in the cytoplasm. Functionally, an essential GTPase which binds GTP, GDP and possibly (p)ppGpp with moderate affinity, with high nucleotide exchange rates and a fairly low GTP hydrolysis rate. Plays a role in control of the cell cycle, stress response, ribosome biogenesis and in those bacteria that undergo differentiation, in morphogenesis control. The sequence is that of GTPase Obg from Nitrobacter winogradskyi (strain ATCC 25391 / DSM 10237 / CIP 104748 / NCIMB 11846 / Nb-255).